Consider the following 191-residue polypeptide: Potassium-transporting ATPase KdpC subunit (191 aa).

The chain crosses the membrane as a helical span at residues 6 to 26 (PALVLFILLTLLTGGVYPLLT).

Belongs to the KdpC family. In terms of assembly, the system is composed of three essential subunits: KdpA, KdpB and KdpC.

It localises to the cell inner membrane. Part of the high-affinity ATP-driven potassium transport (or Kdp) system, which catalyzes the hydrolysis of ATP coupled with the electrogenic transport of potassium into the cytoplasm. This subunit acts as a catalytic chaperone that increases the ATP-binding affinity of the ATP-hydrolyzing subunit KdpB by the formation of a transient KdpB/KdpC/ATP ternary complex. In Klebsiella pneumoniae (strain 342), this protein is Potassium-transporting ATPase KdpC subunit.